A 143-amino-acid polypeptide reads, in one-letter code: Transcription antitermination protein NusB (143 aa).

Belongs to the NusB family.

Functionally, involved in transcription antitermination. Required for transcription of ribosomal RNA (rRNA) genes. Binds specifically to the boxA antiterminator sequence of the ribosomal RNA (rrn) operons. The chain is Transcription antitermination protein NusB from Dehalococcoides mccartyi (strain ATCC BAA-2266 / KCTC 15142 / 195) (Dehalococcoides ethenogenes (strain 195)).